The sequence spans 530 residues: Anthranilate synthase component 1, pyocyanine specific (530 aa).

Substrate is bound at residue 331 to 332; the sequence is GT. E364 contacts Mg(2+). Substrate contacts are provided by residues Y452, R472, 486-488, and G488; that span reads GAG. E501 contributes to the Mg(2+) binding site.

Belongs to the anthranilate synthase component I family. In terms of assembly, heterotetramer consisting of two non-identical subunits: a beta subunit (PhnB) and a large alpha subunit (PhnA). The cofactor is Mg(2+).

The catalysed reaction is chorismate + L-glutamine = anthranilate + pyruvate + L-glutamate + H(+). The protein operates within secondary metabolite biosynthesis; pyocyanine biosynthesis. Its function is as follows. Part of a heterotetrameric complex that catalyzes the two-step biosynthesis of anthranilate, a precursor for Pseudomonas quinolone signal (2-heptyl-3-hydroxy-4-quinolone; PQS) production which is required to induce the genes for the biosynthesis of the virulence factor pyocyanine (PCN), a characteristic blue-green phenazine pigment produced by P.aeruginosa. In the first step, the glutamine-binding beta subunit (PhnB) of anthranilate synthase (AS) provides the glutamine amidotransferase activity which generates ammonia as a substrate that, along with chorismate, is used in the second step, catalyzed by the large alpha subunit of AS (PhnA) to produce anthranilate. The protein is Anthranilate synthase component 1, pyocyanine specific of Pseudomonas aeruginosa (strain ATCC 15692 / DSM 22644 / CIP 104116 / JCM 14847 / LMG 12228 / 1C / PRS 101 / PAO1).